We begin with the raw amino-acid sequence, 302 residues long: 1D-myo-inositol 2-acetamido-2-deoxy-alpha-D-glucopyranoside deacetylase (302 aa).

The Zn(2+) site is built by His-13, Asp-16, and His-155.

This sequence belongs to the MshB deacetylase family. Zn(2+) serves as cofactor.

It catalyses the reaction 1D-myo-inositol 2-acetamido-2-deoxy-alpha-D-glucopyranoside + H2O = 1D-myo-inositol 2-amino-2-deoxy-alpha-D-glucopyranoside + acetate. Its function is as follows. Catalyzes the deacetylation of 1D-myo-inositol 2-acetamido-2-deoxy-alpha-D-glucopyranoside (GlcNAc-Ins) in the mycothiol biosynthesis pathway. This is 1D-myo-inositol 2-acetamido-2-deoxy-alpha-D-glucopyranoside deacetylase from Nocardioides sp. (strain ATCC BAA-499 / JS614).